Here is a 646-residue protein sequence, read N- to C-terminus: uncharacterized protein (646 aa).

The next 8 helical transmembrane spans lie at 20–42 (ILSR…LYLL), 55–77 (FLAG…IHQV), 97–115 (LLHF…HYML), 127–149 (YTFD…FSYW), 159–181 (IAFV…FFKL), 188–206 (ILLG…LLLA), 216–238 (YGAV…YHLF), and 251–273 (WVTM…IGTA).

It is found in the cell membrane. This is an uncharacterized protein from Bacillus subtilis (strain 168).